We begin with the raw amino-acid sequence, 225 residues long: MVTHSKFPAAGMSRPLDTSLRLKTFSSKSEYQLVVNAVCKLQESGFYWSAVTGGEANLLLSAEPAGTFLIRDSSDQRHFFTLSVKTQSGTKNLRIQCEGGSFSLQSDPRSTQPVPRFDCVLKLVHHYMPPPGAPSFPAPPTEPSSEVSEQPPSQPLPGNPPRRAYYIYSGGEKIPLVLSRPLSSNVATLQHLCRKTVNGHLDSYEKVTQLPGAIREFLDQYDAPL.

Positions 22–33 (LKTFSSKSEYQL) are kinase inhibitory region (KIR). Residues 34–45 (VVNAVCKLQESG) are extended SH2 subdomain (ESS). The region spanning 46–142 (FYWSAVTGGE…APSFPAPPTE (97 aa)) is the SH2 domain. Positions 131–142 (PGAPSFPAPPTE) are enriched in pro residues. The tract at residues 131–162 (PGAPSFPAPPTEPSSEVSEQPPSQPLPGNPPR) is disordered. Residues 177–224 (VLSRPLSSNVATLQHLCRKTVNGHLDSYEKVTQLPGAIREFLDQYDAP) form the SOCS box domain.

In terms of assembly, interacts with multiple activated proteins of the tyrosine kinase signaling pathway including IGF1 receptor, insulin receptor and JAK2. Binding to JAK2 is mediated through the KIR and SH2 domains to a phosphorylated tyrosine residue within the JAK2 JH1 domain. Binds specific activated tyrosine residues of the leptin, EPO, IL12, GSCF and gp130 receptors. Interaction with CSNK1E stabilizes SOCS3 protein. Component of the probable ECS(SOCS3) E3 ubiquitin-protein ligase complex which contains CUL5, RNF7/RBX2, Elongin BC complex and SOCS3. Interacts with CUL5, RNF7, ELOB and ELOC. Interacts with FGFR3. Interacts with INSR. Interacts with BCL10; this interaction may interfere with BCL10-binding with PELI2. Interacts with NOD2 (via CARD domain); the interaction promotes NOD2 degradation. In terms of processing, phosphorylated on tyrosine residues after stimulation by the cytokines, IL-2, EPO or IGF1.

It functions in the pathway protein modification; protein ubiquitination. In terms of biological role, SOCS family proteins form part of a classical negative feedback system that regulates cytokine signal transduction. SOCS3 is involved in negative regulation of cytokines that signal through the JAK/STAT pathway. Inhibits cytokine signal transduction by binding to tyrosine kinase receptors including IL6ST/gp130, LIF, erythropoietin, insulin, IL12, GCSF and leptin receptors. Binding to JAK2 inhibits its kinase activity and regulates IL6 signaling. Suppresses fetal liver erythropoiesis. Regulates onset and maintenance of allergic responses mediated by T-helper type 2 cells. Probable substrate recognition component of a SCF-like ECS (Elongin BC-CUL2/5-SOCS-box protein) E3 ubiquitin-protein ligase complex which mediates the ubiquitination and subsequent proteasomal degradation of target proteins. The protein is Suppressor of cytokine signaling 3 (SOCS3) of Canis lupus familiaris (Dog).